A 121-amino-acid chain; its full sequence is Neuromedin-B (121 aa).

The first 24 residues, 1 to 24, serve as a signal peptide directing secretion; that stretch reads MARRAGGARMFGSLLLFALLAAGV. Methionine 56 carries the post-translational modification Methionine amide. Residues 60–121 constitute a propeptide that is removed on maturation; sequence SLEPSSPSPL…RRLLVQILQK (62 aa).

It belongs to the bombesin/neuromedin-B/ranatensin family.

Its subcellular location is the secreted. The protein localises to the cell projection. The protein resides in the neuron projection. Stimulates smooth muscle contraction. Induces sighing by acting directly on the pre-Botzinger complex, a cluster of several thousand neurons in the ventrolateral medulla responsible for inspiration during respiratory activity. Contributes to the induction of sneezing following exposure to chemical irritants or allergens which causes release of NMB by nasal sensory neurons and activation of NMBR-expressing neurons in the sneeze-evoking region of the brainstem. These in turn activate neurons of the caudal ventral respiratory group, giving rise to the sneezing response. Contributes to induction of acute itch, possibly through activation of the NMBR receptor on dorsal root ganglion neurons. Increases expression of NMBR and steroidogenic mediators STAR, CYP11A1 and HSD3B1 in Leydig cells, induces secretion of testosterone by Leydig cells and also promotes Leydig cell proliferation. Plays a role in the innate immune response to influenza A virus infection by enhancing interferon alpha expression and reducing expression of IL6. Plays a role in CSF1-induced proliferation of osteoclast precursors by contributing to the positive regulation of the expression of the CSF1 receptor CSF1R. The polypeptide is Neuromedin-B (NMB) (Homo sapiens (Human)).